A 389-amino-acid chain; its full sequence is uncharacterized protein (389 aa).

Positions 1–12 (MVHATSQSASTE) are enriched in polar residues. 2 disordered regions span residues 1–49 (MVHA…DEDL) and 86–111 (HKSM…ANRA). The segment covering 40-49 (ESGDEYDEDL) has biased composition (acidic residues). The span at 93–110 (RGKKKRGKTAKKAKKANR) shows a compositional bias: basic residues.

This is an uncharacterized protein from Caenorhabditis elegans.